Reading from the N-terminus, the 277-residue chain is Putative phosphoenolpyruvate synthase regulatory protein (277 aa).

Residue Gly-157 to Thr-164 participates in ADP binding.

Belongs to the pyruvate, phosphate/water dikinase regulatory protein family. PSRP subfamily.

It catalyses the reaction [pyruvate, water dikinase] + ADP = [pyruvate, water dikinase]-phosphate + AMP + H(+). The catalysed reaction is [pyruvate, water dikinase]-phosphate + phosphate + H(+) = [pyruvate, water dikinase] + diphosphate. Bifunctional serine/threonine kinase and phosphorylase involved in the regulation of the phosphoenolpyruvate synthase (PEPS) by catalyzing its phosphorylation/dephosphorylation. The sequence is that of Putative phosphoenolpyruvate synthase regulatory protein from Photobacterium profundum (strain SS9).